Consider the following 357-residue polypeptide: Low-salt glycan biosynthesis nucleotidyltransferase Agl11 (357 aa).

2 residues coordinate Mg(2+): D108 and D221.

The protein belongs to the glucose-1-phosphate thymidylyltransferase family. The cofactor is Mg(2+).

It functions in the pathway protein modification; protein glycosylation. Its pathway is cell surface structure biogenesis; S-layer biogenesis. In terms of biological role, nucleotidyltransferase involved in N-glycan biosynthetic pathway that takes place under low-salt conditions (1.75 M instead of 3.4 M). Participates in the formation of the tetrasaccharide present at 'Asn-532' of S-layer glycoprotein Csg, consisting of a sulfated hexose, 2 hexoses and rhamnose. Involved in the addition of final rhamnose (sugar 4) of the tetrasaccharide on the dolichol phosphate carrier. The sequence is that of Low-salt glycan biosynthesis nucleotidyltransferase Agl11 (agl11) from Haloferax volcanii (strain ATCC 29605 / DSM 3757 / JCM 8879 / NBRC 14742 / NCIMB 2012 / VKM B-1768 / DS2) (Halobacterium volcanii).